The sequence spans 128 residues: Glycoprotein hormone alpha-2 (128 aa).

Positions 1 to 20 are cleaved as a signal peptide; it reads MPMAPRVLLLCLLGLAVTEG. 4 disulfides stabilise this stretch: Cys30–Cys88, Cys47–Cys102, Cys56–Cys118, and Cys60–Cys120. N-linked (GlcNAc...) asparagine glycans are attached at residues Asn36 and Asn80.

It belongs to the glycoprotein hormones subunit alpha family. As to quaternary structure, heterodimer with GPHB5; this heterodimer interacts with thyroid-stimulating hormone receptor (TSHR), and hence stimulates cAMP production.

The protein localises to the secreted. In terms of biological role, functions as a heterodimeric glycoprotein hormone with GPHB5 able to bind and activate the thyroid-stimulating hormone receptor (TSHR), leading to increased cAMP production. Plays a central role in controlling thyroid cell metabolism. This Mus musculus (Mouse) protein is Glycoprotein hormone alpha-2 (Gpha2).